The chain runs to 340 residues: Anthocyanidin reductase (340 aa).

Residues Lys49 and Tyr169 each coordinate NADP(+).

It belongs to the NAD(P)-dependent epimerase/dehydratase family. Dihydroflavonol-4-reductase subfamily. In terms of assembly, homo- or heterodimer. Flowers and young siliques. Detected specifically in the endothelium of seed coat.

It carries out the reaction a (2R,3R)-flavan-3-ol + 2 NAD(+) = an anthocyanidin with a 3-hydroxy group + 2 NADH + 2 H(+). The catalysed reaction is a (2R,3R)-flavan-3-ol + 2 NADP(+) = an anthocyanidin with a 3-hydroxy group + 2 NADPH + 2 H(+). It participates in secondary metabolite biosynthesis; flavonoid biosynthesis. With respect to regulation, inhibited by (+)-catechin, quercetin and (+)- and (-)-dihydroquercetin. Not inhibited by salt. Positive cooperativity with NADPH acting as cosubstrate and modulator. Functionally, involved in the biosynthesis of condensed tannins. Converts cyanidin into (-)-epicatechin as the major product. This is Anthocyanidin reductase (BAN) from Arabidopsis thaliana (Mouse-ear cress).